The primary structure comprises 131 residues: Small ribosomal subunit protein uS8 (131 aa).

This sequence belongs to the universal ribosomal protein uS8 family. Part of the 30S ribosomal subunit. Contacts proteins S5 and S12.

Its function is as follows. One of the primary rRNA binding proteins, it binds directly to 16S rRNA central domain where it helps coordinate assembly of the platform of the 30S subunit. This Finegoldia magna (strain ATCC 29328 / DSM 20472 / WAL 2508) (Peptostreptococcus magnus) protein is Small ribosomal subunit protein uS8.